Reading from the N-terminus, the 316-residue chain is Protoheme IX farnesyltransferase (316 aa).

9 helical membrane-spanning segments follow: residues 29 to 49 (IIPL…EGRV), 54 to 74 (LLIT…LNCI), 102 to 122 (LIFA…FVNV), 123 to 143 (LSGC…THWL), 151 to 171 (IVIG…AVTG), 179 to 199 (VLFA…ALMI), 224 to 241 (IWYY…LVYP), 245 to 267 (LGIL…AWQL), and 283 to 303 (FSIF…LPVT).

This sequence belongs to the UbiA prenyltransferase family. Protoheme IX farnesyltransferase subfamily.

The protein localises to the cell inner membrane. It carries out the reaction heme b + (2E,6E)-farnesyl diphosphate + H2O = Fe(II)-heme o + diphosphate. The protein operates within porphyrin-containing compound metabolism; heme O biosynthesis; heme O from protoheme: step 1/1. Functionally, converts heme B (protoheme IX) to heme O by substitution of the vinyl group on carbon 2 of heme B porphyrin ring with a hydroxyethyl farnesyl side group. This chain is Protoheme IX farnesyltransferase, found in Synechocystis sp. (strain ATCC 27184 / PCC 6803 / Kazusa).